A 258-amino-acid chain; its full sequence is Short-chain dehydrogenase/reductase aba4 (258 aa).

NADP(+)-binding residues include Ile20, Asp66, and Lys130. Residues Ser146 and Tyr160 each act as proton donor in the active site. Positions 160, 164, 193, and 195 each coordinate NADP(+). The Lowers pKa of active site Tyr role is filled by Lys164.

Belongs to the short-chain dehydrogenases/reductases (SDR) family.

Its pathway is hormone biosynthesis. In terms of biological role, short-chain dehydrogenase/reductase; part of the gene cluster that mediates the biosynthesis of abscisic acid (ABA), a phytohormone that acts antagonistically toward salicylic acid (SA), jasmonic acid (JA) and ethylene (ETH) signaling, to impede plant defense responses. The first step of the pathway catalyzes the reaction from farnesyl diphosphate to alpha-ionylideneethane performed by the alpha-ionylideneethane synthase aba3 via a three-step reaction mechanism involving 2 neutral intermediates, beta-farnesene and allofarnesene. The cytochrome P450 monooxygenase aba1 might then be involved in the conversion of alpha-ionylideneethane to alpha-ionylideneacetic acid. Alpha-ionylideneacetic acid is further converted to abscisic acid in 2 steps involving the cytochrome P450 monooxygenase aba2 and the short-chain dehydrogenase/reductase aba4, via the intermediates 1'-deoxy-ABA or 1',4'-trans-diol-ABA, depending on the order of action of these 2 enzymes. Aba2 is responsible for the hydroxylation of carbon atom C-1' and aba4 might be involved in the oxidation of the C-4' carbon atom. This Botryotinia fuckeliana (strain B05.10) (Noble rot fungus) protein is Short-chain dehydrogenase/reductase aba4.